A 226-amino-acid chain; its full sequence is Pathogenesis-related protein R minor form (226 aa).

Positions 1 to 25 (MNFLKSFPFYAFLCFGQYFVAVTHA) are cleaved as a signal peptide. 8 disulfides stabilise this stretch: C34-C225, C75-C85, C90-C96, C140-C214, C145-C197, C153-C163, C167-C176, and C177-C184.

This sequence belongs to the thaumatin family.

The protein resides in the vacuole. In Nicotiana tabacum (Common tobacco), this protein is Pathogenesis-related protein R minor form.